A 392-amino-acid polypeptide reads, in one-letter code: Copper-containing nitrite reductase (392 aa).

The first 18 residues, 1–18 (MKRQALAAMIASLFALAA), serve as a signal peptide directing secretion. A lipid anchor (N-palmitoyl cysteine) is attached at Cys19. Cys19 is lipidated: S-diacylglycerol cysteine. Residues 30–49 (ETPAASAEAASSAAQATAET) form a disordered region. 2 Plastocyanin-like domains span residues 101–195 (WTFD…ILVE) and 245–346 (GHVG…LKVE). Cu cation-binding residues include His134, His139, His174, Cys175, His183, and Met188. His139 serves as a coordination point for substrate. His280 contacts substrate. His329 is a Cu cation binding site. The disordered stretch occupies residues 367–392 (GAASAPAASAPAASAPAASASEKSVY). 4 tandem repeats follow at residues 368 to 372 (AASAP), 373 to 377 (AASAP), 378 to 382 (AASAP), and 383 to 387 (AASAS). The 4 X 5 AA tandem repeats of A-A-S-A-P stretch occupies residues 368-387 (AASAPAASAPAASAPAASAS).

Belongs to the multicopper oxidase family. Homotrimer. It depends on Cu(+) as a cofactor. Requires Cu(2+) as cofactor. Post-translationally, palmitoylated.

The protein localises to the cell outer membrane. The enzyme catalyses nitric oxide + Fe(III)-[cytochrome c] + H2O = Fe(II)-[cytochrome c] + nitrite + 2 H(+). Its function is as follows. Catalyzes the reduction of nitrite to nitric oxide (NO), probably with azurin as electron donor. Essential for growth and survival in oxygen-depleted environments. Can also provide protection against killing by normal human sera. The chain is Copper-containing nitrite reductase (aniA) from Neisseria gonorrhoeae.